A 452-amino-acid chain; its full sequence is Scaffold protein ILK (452 aa).

An N-acetylmethionine modification is found at methionine 1. ANK repeat units follow at residues 2 to 30 (DDIF…LNQG), 31 to 63 (DDHG…INVM), 64 to 96 (NRGD…INAV), 97 to 129 (NEHG…VSIC), and 130 to 174 (NKYG…GTTR). The tract at residues 33–139 (HGFSPLHWAC…NKYGEMPVDK (107 aa)) is interaction with LIMS1. Threonine 173 carries the post-translational modification Phosphothreonine. The interval 180–212 (GTLNKHSGIDFKQLNFLAKLNENHSGELWKGRW) is PH-like; mediates interaction with TGFB1I1. Serine 186 bears the Phosphoserine mark. The region spanning 193–446 (LNFLAKLNEN…PKFDMIVPIL (254 aa)) is the Protein kinase domain. Asparagine 200, asparagine 202, histidine 203, and serine 204 together coordinate ATP. Serine 246 bears the Phosphoserine mark. ATP-binding residues include histidine 270, methionine 272, and asparagine 279. Mg(2+) is bound at residue aspartate 339. Lysine 341 lines the ATP pocket. The Nuclear localization signal signature appears at 363-371 (KKPEDTNRR). Lysine 426 is modified (N6-acetyllysine).

The protein belongs to the protein kinase superfamily. TKL Ser/Thr protein kinase family. As to quaternary structure, component of the heterotrimeric IPP (ILK-PINCH-PARVIN) complex composed of ILK, LIMS1/PINCH and PARVA; the complex binds to F-actin via the C-terminal tail of LIMS1 and the N-terminal region of PARVA, promoting F-actin filament bundling. Formation of the IPP complex is dependent on protein kinase C and precedes integrin-mediated cell adhesion and spreading. ILK also interacts with LIMS2/PINCH2 and with PARVB and PARVG which may substitute for LIMS1 and PARVA in the IPP complex; PARVA and PARVB compete for the same binding site. Interaction with PARVG promotes the establishment of cell polarity required for leukocyte migration. Interacts with the cytoplasmic domain of integrin ITGB1 and may also interact with integrins ITGB2, ITGB3 and/or ITGB5. Interacts probably also with TGFB1I1. Interacts (via ANK repeats) with EPHA1 (via SAM domain); stimulated by EFNA1 but independent of the kinase activity of EPHA1. Interacts with FERMT2. Interacts with LIMD2; leading to activate the protein kinase activity. Interacts with PXN/PAXILLIN (via LD motif 4). Interacts with CCDC25 (via cytoplasmic region); initiating the ILK-PARVB cascade to induce cytoskeleton rearrangement and directional migration of cells. Interacts with IQGAP1; the interaction is required for localization of IQGAP1 to the cell cortex. In terms of processing, phosphorylation by PAK1 modulates ILK subcellular location by promoting its nuclear export. As to expression, highly expressed in lung, heart, kidney, liver, brain, spleen and skeletal muscle. Weakly expressed in testis.

The protein resides in the cell junction. It localises to the focal adhesion. It is found in the cell membrane. The protein localises to the cytoplasm. Its subcellular location is the myofibril. The protein resides in the sarcomere. It localises to the cell projection. It is found in the lamellipodium. The protein localises to the nucleus. Its subcellular location is the cytoskeleton. The protein resides in the microtubule organizing center. It localises to the centrosome. It is found in the cell cortex. Its function is as follows. Scaffold protein which mediates protein-protein interactions during a range of cellular events including focal adhesion assembly, cell adhesion and cell migration. Regulates integrin-mediated signal transduction by contributing to inside-out integrin activation. Recruits PARVA and LIMS1/PITCH to form the heterotrimeric IPP (ILK-PINCH-PARVIN) complex which binds to F-actin via the C-terminal tail of LIMS1 and the N-terminal region of PARVA, promoting F-actin filament bundling, a process required to generate force for actin cytoskeleton reorganization and subsequent dynamic cell adhesion events such as cell spreading and migration. Binding to PARVA promotes effective assembly of ILK into focal adhesions while PARVA-bound ILK can simultaneously engage integrin-beta cytoplasmic tails to mediate cell adhesion. Plays a role with PARVG in promoting the cell adhesion and spreading of leukocytes. Acts as an upstream effector of both AKT1/PKB and GSK3. Mediates trafficking of caveolae to the cell surface in an ITGB1-dependent manner by promoting the recruitment of IQGAP1 to the cell cortex which cooperates with its effector DIAPH1 to locally stabilize microtubules and allow stable insertion of caveolae into the plasma membrane. Required for the maintenance of mitotic spindle integrity by promoting phosphorylation of TACC3 by AURKA. Associates with chromatin and may act as a negative regulator of transcription when located in the nucleus. The polypeptide is Scaffold protein ILK (Mus musculus (Mouse)).